The primary structure comprises 255 residues: Indole-3-glycerol phosphate synthase (255 aa).

The protein belongs to the TrpC family.

The enzyme catalyses 1-(2-carboxyphenylamino)-1-deoxy-D-ribulose 5-phosphate + H(+) = (1S,2R)-1-C-(indol-3-yl)glycerol 3-phosphate + CO2 + H2O. Its pathway is amino-acid biosynthesis; L-tryptophan biosynthesis; L-tryptophan from chorismate: step 4/5. This Streptococcus pneumoniae serotype 19F (strain G54) protein is Indole-3-glycerol phosphate synthase.